The following is a 453-amino-acid chain: Autophagy-related protein 18 (453 aa).

WD repeat units follow at residues 9-49 (KSSN…YTNN), 204-244 (AHKT…KLHQ), and 249-288 (SYAA…GAGA). Residues 245-249 (FRRGS) carry the L/FRRG motif motif. The tract at residues 284 to 324 (AGAGAKGRSSSNGGESPSLNSFDGSSDSSSPPGSTTNATRG) is disordered. Residues 289-320 (KGRSSSNGGESPSLNSFDGSSDSSSPPGSTTN) show a composition bias toward low complexity.

The protein belongs to the WD repeat PROPPIN family. As to quaternary structure, component of the PI(3,5)P2 regulatory complex.

It localises to the preautophagosomal structure membrane. The protein localises to the vacuole membrane. The protein resides in the endosome membrane. The PI(3,5)P2 regulatory complex regulates both the synthesis and turnover of phosphatidylinositol 3,5-bisphosphate (PtdIns(3,5)P2). Necessary for proper vacuole morphology. Plays an important role in osmotically-induced vacuole fragmentation. Required for cytoplasm to vacuole transport (Cvt) vesicle formation, pexophagy and starvation-induced autophagy. Involved in correct ATG9 trafficking to the pre-autophagosomal structure. Might also be involved in premeiotic DNA replication. This chain is Autophagy-related protein 18 (ATG18), found in Mycosarcoma maydis (Corn smut fungus).